The sequence spans 780 residues: Reticulon-1 (780 aa).

4 disordered regions span residues 1 to 76 (MAAP…VAME), 128 to 176 (QKEN…AEST), 201 to 223 (RPQEAKGQEEQHPGLEDKDLDFK), and 293 to 576 (MTAT…IPGP). A phosphoserine mark is found at S13 and S70. Residue S327 is modified to Phosphoserine. Over residues 328 to 341 (PGSVTPPSSGTEPS) the composition is skewed to low complexity. A phosphoserine mark is found at S350, S352, and S487. Positions 497-512 (AIREETGSRATEERAP) are enriched in basic and acidic residues. Residues 593–780 (AIDLLYWRDI…KIPGAKRHAE (188 aa)) enclose the Reticulon domain. 2 consecutive transmembrane segments (helical) span residues 607 to 627 (IVFGSFLLLLFSLTQFSVVSV) and 709 to 729 (FAVLMWLLTYVGALFNGLTLL).

As to quaternary structure, interacts with NDRG1. Interacts with BACE1. Interacts with TMEM33.

It localises to the endoplasmic reticulum membrane. It is found in the golgi apparatus membrane. Inhibits amyloid precursor protein processing, probably by blocking BACE1 activity. This chain is Reticulon-1 (Rtn1), found in Mus musculus (Mouse).